Consider the following 225-residue polypeptide: MPDIKYLKKLALIGAINKIIKVSSSEFQKHTGASSKTTARKLKQLEDERLIERKIVPGGQLIKMTDKGIEVLKNEYVDYSRIFSPDLDILELEGKVLKGLGEGQYYVNIPGYRKQFEEKLHFVPFPGTLNVQLSESSSSLRNLLLETPAIRVEGFNDGERTFGGGKCYPVVVGSIEAAVVVPERTHYPSDLIEIIAPIKLRDALKLKDGDRVVVQLKKQGTENQK.

The unknown stretch occupies residues Met1–Ile89. Residues Leu90–Lys225 are riboflavin kinase. Gly99–Gln104 serves as a coordination point for CDP. Positions 128 and 130 each coordinate Mg(2+). Positions 185 and 193 each coordinate FMN. Ile198–Arg201 provides a ligand contact to CDP.

This sequence belongs to the archaeal riboflavin kinase family. Requires Mg(2+) as cofactor.

It catalyses the reaction riboflavin + CTP = CDP + FMN + H(+). Its pathway is cofactor biosynthesis; FMN biosynthesis; FMN from riboflavin (CTP route): step 1/1. Catalyzes the CTP-dependent phosphorylation of riboflavin (vitamin B2) to form flavin mononucleotide (FMN). The polypeptide is Riboflavin kinase (ribK) (Methanosarcina barkeri (strain Fusaro / DSM 804)).